The chain runs to 153 residues: Ribonuclease H (153 aa).

Positions 1–141 constitute an RNase H type-1 domain; the sequence is MKLVEIFTDG…CDELAKAGAN (141 aa). The Mg(2+) site is built by Asp9, Glu47, Asp69, and Asp133.

Belongs to the RNase H family. As to quaternary structure, monomer. Requires Mg(2+) as cofactor.

The protein localises to the cytoplasm. The enzyme catalyses Endonucleolytic cleavage to 5'-phosphomonoester.. Functionally, endonuclease that specifically degrades the RNA of RNA-DNA hybrids. This Actinobacillus pleuropneumoniae serotype 5b (strain L20) protein is Ribonuclease H.